The following is a 338-amino-acid chain: Putative pectinesterase 63 (338 aa).

Residues 1-24 form the signal peptide; the sequence is MGYNYVSLIVTILLVVITSPVVFG. Thr-116 and Gln-151 together coordinate substrate. The active-site Proton donor is Asp-174. Asp-195 (nucleophile) is an active-site residue. Residue Arg-252 coordinates substrate.

This sequence belongs to the pectinesterase family.

Its subcellular location is the secreted. The protein resides in the cell wall. It catalyses the reaction [(1-&gt;4)-alpha-D-galacturonosyl methyl ester](n) + n H2O = [(1-&gt;4)-alpha-D-galacturonosyl](n) + n methanol + n H(+). It functions in the pathway glycan metabolism; pectin degradation; 2-dehydro-3-deoxy-D-gluconate from pectin: step 1/5. Acts in the modification of cell walls via demethylesterification of cell wall pectin. In Arabidopsis thaliana (Mouse-ear cress), this protein is Putative pectinesterase 63 (PME63).